A 146-amino-acid polypeptide reads, in one-letter code: uncharacterized protein (146 aa).

2 helical membrane-spanning segments follow: residues 89 to 111 (AIEM…LLLY) and 121 to 143 (IGCG…YSVV).

Its subcellular location is the cell membrane. This is an uncharacterized protein from Archaeoglobus fulgidus (strain ATCC 49558 / DSM 4304 / JCM 9628 / NBRC 100126 / VC-16).